Consider the following 107-residue polypeptide: uncharacterized protein (107 aa).

Residues Gly-88–Arg-107 form a disordered region.

The protein localises to the virion. This is an uncharacterized protein from Acanthamoeba polyphaga (Amoeba).